A 407-amino-acid chain; its full sequence is DAZ-associated protein 1 (407 aa).

The residue at position 1 (methionine 1) is an N-acetylmethionine. 2 consecutive RRM domains span residues 10–97 and 113–190; these read GKLF…RTRP and NKIF…RAEP. The disordered stretch occupies residues 74–117; that stretch reads TLDGRNIDPKPCTPRGMQPERTRPKEGWQKGPRSDNSKSNKIFV. Residues 91 to 111 are compositionally biased toward basic and acidic residues; sequence QPERTRPKEGWQKGPRSDNSK. Lysine 150 carries the post-translational modification N6-acetyllysine. The span at 185–194 shows a compositional bias: basic and acidic residues; the sequence is VKRAEPRDSK. A disordered region spans residues 185-407; that stretch reads VKRAEPRDSK…NVQGFHPYRR (223 aa). The span at 195–207 shows a compositional bias: polar residues; it reads SQAPGQPGASQWG. Over residues 247–262 the composition is skewed to pro residues; the sequence is GPPPAGRGAPPPPPPF. Arginine 253 carries the omega-N-methylarginine modification. Over residues 280–294 the composition is skewed to low complexity; sequence FPQGYGAPPQFSFGY. Residues 295–315 are compositionally biased toward pro residues; it reads GPPPPPPDQFAPPGVPPPPAT. Low complexity predominate over residues 364 to 379; that stretch reads SDPSQQPPSYGGPSVP. Gly residues predominate over residues 380–393; that stretch reads GSGGPPAGGSGFGR.

Interacts with DAZ and DAZL. Post-translationally, acetylation at Lys-150 is predominantly observed in the nuclear fraction, and may regulate nucleocytoplasmic transport. As to expression, mainly expressed in testis. Expressed to a lower level in thymus. Weakly or not expressed in heart, liver, brain, placenta, lung, skeletal muscle, kidney and pancreas.

The protein resides in the cytoplasm. It localises to the nucleus. Its function is as follows. RNA-binding protein, which may be required during spermatogenesis. In Homo sapiens (Human), this protein is DAZ-associated protein 1 (DAZAP1).